The primary structure comprises 211 residues: uncharacterized protein (211 aa).

This is an uncharacterized protein from Acidianus convivator (ATV).